The following is a 335-amino-acid chain: Dihydroorotate dehydrogenase (quinone) (335 aa).

FMN contacts are provided by residues 59–63 (AGADK) and threonine 83. Residue lysine 63 coordinates substrate. 108-112 (NRNGF) contributes to the substrate binding site. FMN is bound by residues asparagine 136 and asparagine 169. Substrate is bound at residue asparagine 169. The active-site Nucleophile is serine 172. Asparagine 174 is a substrate binding site. FMN-binding residues include lysine 214 and glycine 242. 243-244 (NT) lines the substrate pocket. Residues glycine 265, glycine 294, and 315 to 316 (YS) contribute to the FMN site.

The protein belongs to the dihydroorotate dehydrogenase family. Type 2 subfamily. In terms of assembly, monomer. Requires FMN as cofactor.

It localises to the cell membrane. It carries out the reaction (S)-dihydroorotate + a quinone = orotate + a quinol. It participates in pyrimidine metabolism; UMP biosynthesis via de novo pathway; orotate from (S)-dihydroorotate (quinone route): step 1/1. Catalyzes the conversion of dihydroorotate to orotate with quinone as electron acceptor. The protein is Dihydroorotate dehydrogenase (quinone) of Glaesserella parasuis serovar 5 (strain SH0165) (Haemophilus parasuis).